A 217-amino-acid polypeptide reads, in one-letter code: Biotin transport regulator (217 aa).

Residues 14–49 are disordered; it reads GDGLGNLAGRSADPTGAADKGESGVPVPPTGFVDPT.

May be part of a system that R.meliloti uses to respond to plant (alfalfa) biotin signals. The polypeptide is Biotin transport regulator (bioS) (Rhizobium meliloti (strain 1021) (Ensifer meliloti)).